The primary structure comprises 635 residues: Chaperone protein HtpG (635 aa).

An a; substrate-binding region spans residues 1–336 (MTTAEAAAPE…SADLPLNLSR (336 aa)). Positions 337 to 556 (EMLQDSAILA…ESGIDRRLEK (220 aa)) are b. A c region spans residues 557-635 (LLASAGRLGD…RVMQRGLPTA (79 aa)).

It belongs to the heat shock protein 90 family. As to quaternary structure, homodimer.

The protein localises to the cytoplasm. Its function is as follows. Molecular chaperone. Has ATPase activity. This is Chaperone protein HtpG from Azorhizobium caulinodans (strain ATCC 43989 / DSM 5975 / JCM 20966 / LMG 6465 / NBRC 14845 / NCIMB 13405 / ORS 571).